Reading from the N-terminus, the 213-residue chain is Outer-membrane lipoprotein carrier protein (213 aa).

A signal peptide spans 1-18 (MKYFATICIAAYAGLAGA).

The protein belongs to the LolA family. Monomer.

Its subcellular location is the periplasm. Its function is as follows. Participates in the translocation of lipoproteins from the inner membrane to the outer membrane. Only forms a complex with a lipoprotein if the residue after the N-terminal Cys is not an aspartate (The Asp acts as a targeting signal to indicate that the lipoprotein should stay in the inner membrane). This is Outer-membrane lipoprotein carrier protein from Albidiferax ferrireducens (strain ATCC BAA-621 / DSM 15236 / T118) (Rhodoferax ferrireducens).